The chain runs to 295 residues: UDP-N-acetylenolpyruvoylglucosamine reductase (295 aa).

The FAD-binding PCMH-type domain maps to 26–189; the sequence is VGGQADILFK…IEAEFKGVSS (164 aa). The active site involves arginine 169. The Proton donor role is filled by cysteine 218. Glutamate 288 is an active-site residue.

The protein belongs to the MurB family. Requires FAD as cofactor.

The protein resides in the cytoplasm. The catalysed reaction is UDP-N-acetyl-alpha-D-muramate + NADP(+) = UDP-N-acetyl-3-O-(1-carboxyvinyl)-alpha-D-glucosamine + NADPH + H(+). It participates in cell wall biogenesis; peptidoglycan biosynthesis. In terms of biological role, cell wall formation. The chain is UDP-N-acetylenolpyruvoylglucosamine reductase from Wolbachia sp. subsp. Brugia malayi (strain TRS).